An 846-amino-acid chain; its full sequence is MRAREKERNCQNLWKWGIMLLGMLMTCSAAEDLWVTVYYGVPIWKEATTTLFCASDAKAYKKEAHNIWATHACVPTDPNPQEIELENVTENFNMWKNNMVEQMHEDIISLWDQSLKPCVKLTPLCVTLNCTDELRNSKGNGKVEEEEKRKNCSFNVRDKREQVYALFYKLDIVPIDNNNRTNSTNYRLINCDTSTITQACPKISFEPIPIHFCAPAGFAILKCRDKKFNGTGPCSNVSTVQCTHGIRPVVSTQLLLNGSLAEEEIIIRSENLTNNVKTIIVQLNASIVINCTRPYKYTRQRTSIGLRQSLYTITGKKKKTGYIGQAHCKISRAEWNKALQQVATKLGNLLNKTTITFKPSSGGDPEITSHMLNCGGDFFYCNTSRLFNSTWNQTNSTGFNNGTVTLPCRIKQIVNLWQRVGKAMYAPPIEGLIKCSSNITGLLLTRDGGANNSSHETIRPGGGDMRDNWRSELYKYKVVKIEPIGVAPTKARRRVVEREKRAIGLGAVFLGFLGAAGSTMGAASVTLTVQARQLMSGIVHQQNNLLRAIEAQQHLLQLTVWGIKQLQARVLAVERYLRDQQLLGIWGCSGRHICTTNVPWNSSWSNRSLDEIWQNMTWMEWEREIDNYTGLIYSLIEESQIQQEKNEKELLELDKWASLWNWFSITKWLWYIKLFIMIVGGLIGLRIVFAVLSVVNRVRQGYSPLSFQTLLPVPRGPDRPEEIEEEGGERGRDRSIRLVNGLFALFWDDLRNLCLFSYHRLRDSILIAARIVELLGRRGWEALKYLWNLLQYWSQELRNSASSLLDTIAIAVAERTDRVIEVVQRACRAILNVPRRIRQGLERLLL.

Residues 1–31 form the signal peptide; sequence MRAREKERNCQNLWKWGIMLLGMLMTCSAAE. At 32-674 the chain is on the extracellular side; it reads DLWVTVYYGV…ITKWLWYIKL (643 aa). A disulfide bridge connects residues Cys-53 and Cys-73. Asn-87, Asn-129, Asn-151, Asn-179, Asn-182, Asn-229, Asn-236, Asn-257, Asn-271, Asn-284, and Asn-290 each carry an N-linked (GlcNAc...) asparagine; by host glycan. Intrachain disulfides connect Cys-118–Cys-200, Cys-125–Cys-191, Cys-130–Cys-152, Cys-213–Cys-242, and Cys-223–Cys-234. Residues 130-151 are V1; sequence CTDELRNSKGNGKVEEEEKRKN. Positions 152–191 are V2; the sequence is CSFNVRDKREQVYALFYKLDIVPIDNNNRTNSTNYRLINC. A V3 region spans residues 291-327; that stretch reads CTRPYKYTRQRTSIGLRQSLYTITGKKKKTGYIGQAH. Cys-291 and Cys-328 are disulfide-bonded. Asn-351 carries N-linked (GlcNAc...) asparagine; by host glycosylation. The CD4-binding loop stretch occupies residues 360 to 370; sequence SSGGDPEITSH. Cystine bridges form between Cys-374/Cys-435 and Cys-381/Cys-408. The interval 381-408 is V4; sequence CNTSRLFNSTWNQTNSTGFNNGTVTLPC. N-linked (GlcNAc...) asparagine; by host glycans are attached at residues Asn-382, Asn-388, Asn-392, Asn-395, Asn-401, Asn-438, Asn-451, and Asn-452. 2 V5 regions span residues 450-461 and 453-461; these read ANNSSHETIRPG and SSHETIRPG. A fusion peptide region spans residues 502-522; sequence AIGLGAVFLGFLGAAGSTMGA. An immunosuppression region spans residues 564-582; the sequence is KQLQARVLAVERYLRDQQL. The cysteines at positions 588 and 594 are disulfide-linked. N-linked (GlcNAc...) asparagine; by host glycans are attached at residues Asn-601, Asn-606, Asn-615, and Asn-627. The stretch at 623–657 forms a coiled coil; it reads REIDNYTGLIYSLIEESQIQQEKNEKELLELDKWA. The segment at 652–673 is MPER; binding to GalCer; sequence ELDKWASLWNWFSITKWLWYIK. Residues 675 to 695 traverse the membrane as a helical segment; that stretch reads FIMIVGGLIGLRIVFAVLSVV. Residues 696–846 are Cytoplasmic-facing; it reads NRVRQGYSPL…IRQGLERLLL (151 aa). A YXXL motif; contains endocytosis signal motif is present at residues 702-705; that stretch reads YSPL. S-palmitoyl cysteine; by host attachment occurs at residues Cys-754 and Cys-827. Positions 845 to 846 match the Di-leucine internalization motif motif; sequence LL.

The protein belongs to the HIV-1 env protein family. In terms of assembly, the mature envelope protein (Env) consists of a homotrimer of non-covalently associated gp120-gp41 heterodimers. The resulting complex protrudes from the virus surface as a spike. There seems to be as few as 10 spikes on the average virion. Interacts with host CD4, CCR5 and CXCR4. Gp120 also interacts with the C-type lectins CD209/DC-SIGN and CLEC4M/DC-SIGNR (collectively referred to as DC-SIGN(R)). Gp120 and gp41 interact with GalCer. Gp120 interacts with host ITGA4/ITGB7 complex; on CD4+ T-cells, this interaction results in rapid activation of integrin ITGAL/LFA-1, which facilitates efficient cell-to-cell spreading of HIV-1. Gp120 interacts with cell-associated heparan sulfate; this interaction increases virus infectivity on permissive cells and may be involved in infection of CD4- cells. The mature envelope protein (Env) consists of a homotrimer of non-covalently associated gp120-gp41 heterodimers. The resulting complex protrudes from the virus surface as a spike. There seems to be as few as 10 spikes on the average virion. Post-translationally, highly glycosylated by host. The high number of glycan on the protein is reffered to as 'glycan shield' because it contributes to hide protein sequence from adaptive immune system. In terms of processing, palmitoylation of the transmembrane protein and of Env polyprotein (prior to its proteolytic cleavage) is essential for their association with host cell membrane lipid rafts. Palmitoylation is therefore required for envelope trafficking to classical lipid rafts, but not for viral replication. Specific enzymatic cleavages in vivo yield mature proteins. Envelope glycoproteins are synthesized as an inactive precursor that is heavily N-glycosylated and processed likely by host cell furin in the Golgi to yield the mature SU and TM proteins. The cleavage site between SU and TM requires the minimal sequence [KR]-X-[KR]-R. About 2 of the 9 disulfide bonds of gp41 are reduced by P4HB/PDI, following binding to CD4 receptor.

It is found in the virion membrane. It localises to the host cell membrane. The protein resides in the host endosome membrane. Functionally, oligomerizes in the host endoplasmic reticulum into predominantly trimers. In a second time, gp160 transits in the host Golgi, where glycosylation is completed. The precursor is then proteolytically cleaved in the trans-Golgi and thereby activated by cellular furin or furin-like proteases to produce gp120 and gp41. Its function is as follows. Attaches the virus to the host lymphoid cell by binding to the primary receptor CD4. This interaction induces a structural rearrangement creating a high affinity binding site for a chemokine coreceptor like CXCR4 and/or CCR5. Acts as a ligand for CD209/DC-SIGN and CLEC4M/DC-SIGNR, which are respectively found on dendritic cells (DCs), and on endothelial cells of liver sinusoids and lymph node sinuses. These interactions allow capture of viral particles at mucosal surfaces by these cells and subsequent transmission to permissive cells. HIV subverts the migration properties of dendritic cells to gain access to CD4+ T-cells in lymph nodes. Virus transmission to permissive T-cells occurs either in trans (without DCs infection, through viral capture and transmission), or in cis (following DCs productive infection, through the usual CD4-gp120 interaction), thereby inducing a robust infection. In trans infection, bound virions remain infectious over days and it is proposed that they are not degraded, but protected in non-lysosomal acidic organelles within the DCs close to the cell membrane thus contributing to the viral infectious potential during DCs' migration from the periphery to the lymphoid tissues. On arrival at lymphoid tissues, intact virions recycle back to DCs' cell surface allowing virus transmission to CD4+ T-cells. In terms of biological role, acts as a class I viral fusion protein. Under the current model, the protein has at least 3 conformational states: pre-fusion native state, pre-hairpin intermediate state, and post-fusion hairpin state. During fusion of viral and target intracellular membranes, the coiled coil regions (heptad repeats) assume a trimer-of-hairpins structure, positioning the fusion peptide in close proximity to the C-terminal region of the ectodomain. The formation of this structure appears to drive apposition and subsequent fusion of viral and target cell membranes. Complete fusion occurs in host cell endosomes and is dynamin-dependent, however some lipid transfer might occur at the plasma membrane. The virus undergoes clathrin-dependent internalization long before endosomal fusion, thus minimizing the surface exposure of conserved viral epitopes during fusion and reducing the efficacy of inhibitors targeting these epitopes. Membranes fusion leads to delivery of the nucleocapsid into the cytoplasm. The sequence is that of Envelope glycoprotein gp160 from Human immunodeficiency virus type 1 group M subtype D (isolate NDK) (HIV-1).